The chain runs to 135 residues: ATP synthase epsilon chain (135 aa).

The protein belongs to the ATPase epsilon chain family. As to quaternary structure, F-type ATPases have 2 components, CF(1) - the catalytic core - and CF(0) - the membrane proton channel. CF(1) has five subunits: alpha(3), beta(3), gamma(1), delta(1), epsilon(1). CF(0) has three main subunits: a, b and c.

It localises to the cell inner membrane. Functionally, produces ATP from ADP in the presence of a proton gradient across the membrane. The polypeptide is ATP synthase epsilon chain (Rhodopseudomonas palustris (strain BisA53)).